We begin with the raw amino-acid sequence, 141 residues long: MAKKVTAQIKLQLPAGKATPAPPVGPALGQHGVNIMEFCKRFNAETADKAGMILPVVITVYEDKSFTFIIKTPPASFLLMKAAGLEKGSSEPKRKIVGKVTRKQIEEIARTKMPDLNANSLEAAMKIIEGTAKSMGIEVVD.

This sequence belongs to the universal ribosomal protein uL11 family. Part of the ribosomal stalk of the 50S ribosomal subunit. Interacts with L10 and the large rRNA to form the base of the stalk. L10 forms an elongated spine to which L12 dimers bind in a sequential fashion forming a multimeric L10(L12)X complex. In terms of processing, one or more lysine residues are methylated.

In terms of biological role, forms part of the ribosomal stalk which helps the ribosome interact with GTP-bound translation factors. The protein is Large ribosomal subunit protein uL11 of Thermotoga petrophila (strain ATCC BAA-488 / DSM 13995 / JCM 10881 / RKU-1).